Reading from the N-terminus, the 492-residue chain is Aerolysin-3 (492 aa).

An N-terminal signal peptide occupies residues 1–23; sequence MKKLKITGLSLIISGLLMAQAQA. 2 cysteine pairs are disulfide-bonded: cysteine 42-cysteine 98 and cysteine 182-cysteine 187. An interaction with host N-linked glycan region spans residues 68–84; it reads WQISGLANGWVIMGPGY. Positions 256-288 are part of the transmembrane beta-barrel after proteolytic activation of the toxin and insertion into the host membrane; the sequence is YGLSEKVTTKNKFKWPLVGETELSIEIAANQSW. The segment at 346–355 is interaction with glycans from host GPI-anchor; the sequence is RWGGNAWYTH. Positions 446-492 are excised as a propeptide; sequence AAASHSSRARNLSAGQGLRLEIPLDAQELSGLGFNNVSLSVTPAANQ.

The protein belongs to the aerolysin family. In terms of assembly, homodimer in solution; homoheptamer in the host membrane. After binding to GPI-anchored proteins in target membranes and proteolytic removal of the C-terminal propeptide, the protein assembles into a heptameric pre-pore complex. A further conformation change leads to insertion into the host membrane. Proteolytic cleavage and subsequent release of the propeptide trigger a major conformation change, leading to the formation of a heptameric pre-pore that then inserts into the host membrane.

It is found in the secreted. The protein localises to the host cell membrane. Secreted, cytolytic toxin that forms pores in host membranes after proteolytic removal of a C-terminal propeptide, leading to destruction of the membrane permeability barrier and cell death. The pores are formed by transmembrane beta-strands and are approximately 3 nm in diameter. The polypeptide is Aerolysin-3 (ahh3) (Aeromonas hydrophila).